A 359-amino-acid polypeptide reads, in one-letter code: Peptide chain release factor 1 (359 aa).

Position 236 is an N5-methylglutamine (glutamine 236).

It belongs to the prokaryotic/mitochondrial release factor family. In terms of processing, methylated by PrmC. Methylation increases the termination efficiency of RF1.

It localises to the cytoplasm. In terms of biological role, peptide chain release factor 1 directs the termination of translation in response to the peptide chain termination codons UAG and UAA. The chain is Peptide chain release factor 1 from Lacticaseibacillus casei (strain BL23) (Lactobacillus casei).